The sequence spans 612 residues: Mineralocorticoid receptor (612 aa).

The segment at 1–228 (GNEIADSTVS…STGPSRPSKV (228 aa)) is modulating. Cys-229, Cys-232, Cys-246, Cys-249, Cys-269, Cys-275, Cys-285, and Cys-288 together coordinate Zn(2+). 2 NR C4-type zinc fingers span residues 229-249 (CLVC…CGSC) and 269-293 (CAGR…LQKC). A DNA-binding region (nuclear receptor) is located at residues 229-298 (CLVCGDEASG…RLQKCLQAGM (70 aa)). A hinge region spans residues 299–349 (NLGARKSKKLGKLKGVHEEHPQQPLQQTPTASPKEDTTLTSSSKEPSANSN). Positions 310-348 (KLKGVHEEHPQQPLQQTPTASPKEDTTLTSSSKEPSANS) are disordered. Positions 339 to 348 (SSSKEPSANS) are enriched in low complexity. Residues 350–592 (SLVPLISAVS…EFPAMLVEII (243 aa)) form the NR LBD domain. The 21-hydroxyprogesterone site is built by Asn-398 and Gln-404. Aldosterone is bound by residues Asn-398 and Gln-404. Progesterone is bound by residues Asn-398 and Gln-404. The interval 410–413 (KWAK) is important for coactivator binding. 21-hydroxyprogesterone contacts are provided by Arg-445 and Thr-573. The aldosterone site is built by Arg-445 and Thr-573. Residues Arg-445 and Thr-573 each coordinate progesterone.

It belongs to the nuclear hormone receptor family. NR3 subfamily.

The protein resides in the cytoplasm. Its subcellular location is the nucleus. Functionally, receptor for both mineralocorticoids (MC) such as aldosterone and glucocorticoids (GC) such as corticosterone or cortisol. Binds to mineralocorticoid response elements (MRE) and transactivates target genes. The effect of MC is to increase ion and water transport and thus raise extracellular fluid volume and blood pressure and lower potassium levels. The protein is Mineralocorticoid receptor (nr3c2) of Xenopus laevis (African clawed frog).